Reading from the N-terminus, the 244-residue chain is Biosynthetic peptidoglycan transglycosylase (244 aa).

A helical membrane pass occupies residues 26–46 (FLSYFIGLTVALTFLFRFVPI).

Belongs to the glycosyltransferase 51 family.

It localises to the cell inner membrane. It carries out the reaction [GlcNAc-(1-&gt;4)-Mur2Ac(oyl-L-Ala-gamma-D-Glu-L-Lys-D-Ala-D-Ala)](n)-di-trans,octa-cis-undecaprenyl diphosphate + beta-D-GlcNAc-(1-&gt;4)-Mur2Ac(oyl-L-Ala-gamma-D-Glu-L-Lys-D-Ala-D-Ala)-di-trans,octa-cis-undecaprenyl diphosphate = [GlcNAc-(1-&gt;4)-Mur2Ac(oyl-L-Ala-gamma-D-Glu-L-Lys-D-Ala-D-Ala)](n+1)-di-trans,octa-cis-undecaprenyl diphosphate + di-trans,octa-cis-undecaprenyl diphosphate + H(+). Its pathway is cell wall biogenesis; peptidoglycan biosynthesis. Its function is as follows. Peptidoglycan polymerase that catalyzes glycan chain elongation from lipid-linked precursors. The polypeptide is Biosynthetic peptidoglycan transglycosylase (Mannheimia succiniciproducens (strain KCTC 0769BP / MBEL55E)).